Here is a 343-residue protein sequence, read N- to C-terminus: Tribbles homolog 2 (343 aa).

The tract at residues 25–50 (EELSSIRSAEPSQSFSPNLGSPSPPE) is disordered. Residues 29–45 (SIRSAEPSQSFSPNLGS) show a composition bias toward polar residues. Residues 61-308 (IGKYLLLEPL…SQEILDHPWF (248 aa)) form the Protein kinase domain.

It belongs to the protein kinase superfamily. CAMK Ser/Thr protein kinase family. Tribbles subfamily. As to expression, expressed in granulosa cells of the dominant follicles of the ovary and down-regulated in ovulatory follicles.

It localises to the cytoplasm. The protein resides in the cytoskeleton. Functionally, interacts with MAPK kinases and regulates activation of MAP kinases. Does not display kinase activity. This chain is Tribbles homolog 2, found in Bos taurus (Bovine).